The sequence spans 260 residues: CD40 ligand (260 aa).

Residues 1–22 (MIETYSQTAPRSVATGPPVSMK) lie on the Cytoplasmic side of the membrane. Residues 23–46 (IFMYLLTVFLITQMIGSALFAVYL) form a helical; Signal-anchor for type II membrane protein membrane-spanning segment. The Extracellular segment spans residues 47-260 (HRRLDKIEDE…GFTSFGLLKL (214 aa)). Residues 121-260 (IAAHVISEAS…GFTSFGLLKL (140 aa)) enclose the THD domain. A disulfide bridge connects residues cysteine 177 and cysteine 217. Asparagine 239 carries an N-linked (GlcNAc...) asparagine glycan.

Belongs to the tumor necrosis factor family. In terms of assembly, homotrimer. Interacts with CD28. CD40 ligand, soluble form: Exists as either a monomer or a homotrimer. Forms a ternary complex between CD40 and integrins for CD40-CD40LG signaling. In terms of processing, the soluble form derives from the membrane form by proteolytic processing.

The protein localises to the cell membrane. The protein resides in the cell surface. Its subcellular location is the secreted. In terms of biological role, cytokine that acts as a ligand to CD40/TNFRSF5. Costimulates T-cell proliferation and cytokine production. Its cross-linking on T-cells generates a costimulatory signal which enhances the production of IL4 and IL10 in conjunction with the TCR/CD3 ligation and CD28 costimulation. Induces the activation of NF-kappa-B. Induces the activation of kinases MAPK8 and PAK2 in T-cells. Mediates B-cell proliferation in the absence of co-stimulus as well as IgE production in the presence of IL4. Involved in immunoglobulin class switching. Acts as a ligand for integrins, specifically ITGA5:ITGB1 and ITGAV:ITGB3; both integrins and the CD40 receptor are required for activation of CD40-CD40LG signaling, which have cell-type dependent effects, such as B-cell activation, NF-kappa-B signaling and anti-apoptotic signaling. The sequence is that of CD40 ligand (CD40LG) from Canis lupus familiaris (Dog).